We begin with the raw amino-acid sequence, 77 residues long: Large ribosomal subunit protein bL28 (77 aa).

The protein belongs to the bacterial ribosomal protein bL28 family.

The polypeptide is Large ribosomal subunit protein bL28 (Polaromonas sp. (strain JS666 / ATCC BAA-500)).